Consider the following 88-residue polypeptide: Potassium channel toxin MeuTXKbeta3-meucin-24 (88 aa).

A signal peptide spans 1–22; that stretch reads MMKQQFFLFLAVIVMISSVIEA. Positions 55–88 constitute a BetaSPN-type CS-alpha/beta domain; sequence EYACPVIEKWCEDHCQAKNAIGRCENTECKCLSK. 3 disulfides stabilise this stretch: Cys58/Cys78, Cys65/Cys83, and Cys69/Cys85.

This sequence belongs to the long chain scorpion toxin family. Class 2 subfamily. As to expression, expressed by the venom gland.

It is found in the secreted. Functionally, inhibits voltage-gated potassium channels. The synthetic meucin-24 inhibits the development of P.berghei ookinetes, kills intraerythrocytic P.falciparum, and is cytotoxic to the Drosophila S2 cells at micromolar concentrations. No antibacterial, antifungal and hemolytic activities have been found at micromolar concentrations. This Mesobuthus eupeus (Lesser Asian scorpion) protein is Potassium channel toxin MeuTXKbeta3-meucin-24.